Consider the following 603-residue polypeptide: Nuclear receptor subfamily 2 group C member 1 (603 aa).

The required for interaction with KAT2B stretch occupies residues 1-178 (MATIEEIAHQ…RLQRCIAFGM (178 aa)). Positions 110-185 (FDLCVVCGDK…FGMKQDSVQC (76 aa)) form a DNA-binding region, nuclear receptor. 2 NR C4-type zinc fingers span residues 113–133 (CVVC…CEGC) and 149–168 (CRGS…CQYC). Serine 197 and serine 215 each carry phosphoserine. Threonine 220 carries the phosphothreonine modification. Threonine 222 carries the post-translational modification Phosphothreonine; by MAPK1. A Glycyl lysine isopeptide (Lys-Gly) (interchain with G-Cter in SUMO); alternate cross-link involves residue lysine 250. Lysine 250 participates in a covalent cross-link: Glycyl lysine isopeptide (Lys-Gly) (interchain with G-Cter in SUMO2); alternate. One can recognise an NR LBD domain in the interval 348–590 (GSVHLITGDS…SVIPHILKME (243 aa)). A Phosphoserine; by PKC modification is found at serine 581. The required for interaction with NRIP1 stretch occupies residues 584–603 (PHILKMEPADYNSQIIGHSI). A Glycyl lysine isopeptide (Lys-Gly) (interchain with G-Cter in SUMO2) cross-link involves residue lysine 588.

This sequence belongs to the nuclear hormone receptor family. NR2 subfamily. As to quaternary structure, homodimer. Heterodimer; binds DNA as a heterodimer with NR2C2 required for chromatin remodeling and for binding to promoter regions such as globin DR1 repeats. Interacts with ESR1; the interaction prevents homodimerization of ESR1 and suppresses its transcriptional activity and cell growth. Interacts with NRIP1 (via its LXXLL motifs); the interaction provides corepressor activity. Interacts with HDAC3 (via the DNA-binding domain). Interacts with HDAC4 (via the DNA-binding domain). Interacts with PIAS1; the interaction is required for sumoylation of NR2C1. Interacts with UBE2I; the interaction is required for sumoylation of NR2C1. Interacts with KAT2B; the interaction acts as a corepressor of gene expression. Sumoylation requires both PIAS1 and UBE2I. Sumoylation appears to dissociate NR2C1 from the PML nuclear bodies. Enhances the interaction with NRIP1 but inhibits interaction with KAT2B. In proliferating cells, stimulation by all-trans retinoic acid, activation of MAPK1-mediated phosphorylation and recruitment to PML bodies with subsequent sumoylation, suppresses OCT4 expression. Post-translationally, phosphorylated on several serine and threonine residues. Phosphorylation on Thr-220, stimulated by all-trans retinoic acid (atRA) mediates PML location and sumoylation in proliferating cells which then modulates its association with effector molecules, KAT2B and NRIP1. Phosphorylation on Ser-581 by PKC is important for protein stability and function as activator of RARB.

Its subcellular location is the nucleus. It localises to the PML body. Its function is as follows. Orphan nuclear receptor. Binds the IR7 element in the promoter of its own gene in an autoregulatory negative feedback mechanism. Primarily repressor of a broad range of genes. Binds to hormone response elements (HREs) consisting of two 5'-AGGTCA-3' half site direct repeat consensus sequences. Together with NR2C2, forms the core of the DRED (direct repeat erythroid-definitive) complex that represses embryonic and fetal globin transcription. Also activator of OCT4 gene expression. May be involved in stem cell proliferation and differentiation. Mediator of retinoic acid-regulated preadipocyte proliferation. The polypeptide is Nuclear receptor subfamily 2 group C member 1 (NR2C1) (Macaca fascicularis (Crab-eating macaque)).